We begin with the raw amino-acid sequence, 1016 residues long: Mediator of RNA polymerase II transcription subunit 5 (1016 aa).

This sequence belongs to the Mediator complex subunit 5 family. Component of the Mediator complex.

It is found in the nucleus. Its function is as follows. Component of the Mediator complex, a coactivator involved in the regulated transcription of nearly all RNA polymerase II-dependent genes. Mediator functions as a bridge to convey information from gene-specific regulatory proteins to the basal RNA polymerase II transcription machinery. Mediator is recruited to promoters by direct interactions with regulatory proteins and serves as a scaffold for the assembly of a functional preinitiation complex with RNA polymerase II and the general transcription factors. The polypeptide is Mediator of RNA polymerase II transcription subunit 5 (nut1) (Aspergillus terreus (strain NIH 2624 / FGSC A1156)).